Consider the following 380-residue polypeptide: Probable acyl-CoA dehydrogenase YngJ (380 aa).

Residues 123–132, 156–158, R269, and 337–341 each bind FAD; these read FGLTEPNAGS, WIT, and QIHGG. E364 functions as the Proton acceptor in the catalytic mechanism. Residue 366 to 368 coordinates FAD; sequence TSE.

The protein belongs to the acyl-CoA dehydrogenase family. Requires FAD as cofactor.

It catalyses the reaction a 2,3-saturated acyl-CoA + A = a 2,3-dehydroacyl-CoA + AH2. This Bacillus subtilis (strain 168) protein is Probable acyl-CoA dehydrogenase YngJ (yngJ).